A 329-amino-acid chain; its full sequence is Ketol-acid reductoisomerase (NADP(+)) (329 aa).

The region spanning 2 to 182 (TQLFYDTDAD…GGTRAGILET (181 aa)) is the KARI N-terminal Rossmann domain. Residues 25 to 28 (YGSQ), Ser-51, Ser-53, and 83 to 86 (DEFQ) contribute to the NADP(+) site. The active site involves His-108. Residue Gly-134 coordinates NADP(+). Residues 183–328 (NFKEETETDL…KGLRSMFSWL (146 aa)) form the KARI C-terminal knotted domain. Mg(2+) is bound by residues Asp-191, Glu-195, Glu-227, and Glu-231. Ser-252 contacts substrate.

The protein belongs to the ketol-acid reductoisomerase family. Requires Mg(2+) as cofactor.

The catalysed reaction is (2R)-2,3-dihydroxy-3-methylbutanoate + NADP(+) = (2S)-2-acetolactate + NADPH + H(+). The enzyme catalyses (2R,3R)-2,3-dihydroxy-3-methylpentanoate + NADP(+) = (S)-2-ethyl-2-hydroxy-3-oxobutanoate + NADPH + H(+). The protein operates within amino-acid biosynthesis; L-isoleucine biosynthesis; L-isoleucine from 2-oxobutanoate: step 2/4. Its pathway is amino-acid biosynthesis; L-valine biosynthesis; L-valine from pyruvate: step 2/4. Its function is as follows. Involved in the biosynthesis of branched-chain amino acids (BCAA). Catalyzes an alkyl-migration followed by a ketol-acid reduction of (S)-2-acetolactate (S2AL) to yield (R)-2,3-dihydroxy-isovalerate. In the isomerase reaction, S2AL is rearranged via a Mg-dependent methyl migration to produce 3-hydroxy-3-methyl-2-ketobutyrate (HMKB). In the reductase reaction, this 2-ketoacid undergoes a metal-dependent reduction by NADPH to yield (R)-2,3-dihydroxy-isovalerate. This Prochlorococcus marinus (strain MIT 9312) protein is Ketol-acid reductoisomerase (NADP(+)).